The following is a 222-amino-acid chain: Ribonuclease S-3 (222 aa).

Residues 1-22 form the signal peptide; it reads MFRLQLISAFFILLFSLSPVSA. Cys-38 and Cys-44 are joined by a disulfide. N-linked (GlcNAc...) asparagine glycosylation occurs at Asn-50. His-54 (proton donor) is an active-site residue. RNA contacts are provided by residues His-54, 92-93, 109-110, and 113-114; these read QM, HE, and RH. Cystine bridges form between Cys-68–Cys-117, Cys-177–Cys-210, and Cys-193–Cys-204. The active site involves Glu-110. Catalysis depends on His-114, which acts as the Proton acceptor.

The protein belongs to the RNase T2 family.

The protein localises to the secreted. The protein resides in the extracellular space. It catalyses the reaction a ribonucleotidyl-ribonucleotide-RNA + H2O = a 3'-end 3'-phospho-ribonucleotide-RNA + a 5'-end dephospho-ribonucleoside-RNA + H(+). Self-incompatibility (SI) is the inherited ability of a flowering plant to prevent self-fertilization by discriminating between self and non-self pollen during pollination. In many species, self-incompatibility is controlled by the single, multiallelic locus S. The protein is Ribonuclease S-3 (S3) of Petunia hybrida (Petunia).